We begin with the raw amino-acid sequence, 419 residues long: Sphingomyelin phosphodiesterase 2 (419 aa).

Glu-49 serves as a coordination point for Mg(2+). His-272 (proton acceptor) is an active-site residue. Transmembrane regions (helical) follow at residues 326–346 (FSGY…VLAA) and 354–374 (AIIL…VYLF).

The protein belongs to the neutral sphingomyelinase family. The cofactor is Mg(2+). In terms of tissue distribution, although widely expressed in all tissues examined, except the spleen, high enzymatic activity occurs only in the brain.

It is found in the cell membrane. The enzyme catalyses a sphingomyelin + H2O = phosphocholine + an N-acylsphing-4-enine + H(+). It carries out the reaction an N-(acyl)-sphingosylphosphocholine + H2O = an N-acyl-sphingoid base + phosphocholine + H(+). It catalyses the reaction 1-O-octadecyl-sn-glycero-3-phosphocholine + H2O = 1-O-octadecyl-sn-glycerol + phosphocholine + H(+). The catalysed reaction is 1-hexadecanoyl-sn-glycero-3-phosphocholine + H2O = 1-hexadecanoyl-sn-glycerol + phosphocholine + H(+). The enzyme catalyses a sphingosylphosphocholine + H2O = a sphingoid base + phosphocholine + H(+). It carries out the reaction 1-O-hexadecyl-sn-glycero-3-phosphocholine + H2O = 1-O-hexadecyl-sn-glycerol + phosphocholine + H(+). The protein operates within lipid metabolism; sphingolipid metabolism. Activated by arachidonic acid. In terms of biological role, catalyzes, at least in vitro, the hydrolysis of sphingomyelin to form ceramide and phosphocholine. Also hydrolyzes 1-O-alkyl-2-lyso-sn-glycero-3-phosphocholine (lyso-platelet-activating factor) in vivo. Also acts on 1-acyl-2-lyso-sn-glycero-3-phosphocholine (lyso-PC) and sphingosylphosphocholine. This chain is Sphingomyelin phosphodiesterase 2, found in Mus musculus (Mouse).